Here is a 505-residue protein sequence, read N- to C-terminus: Glutamate--tRNA ligase (505 aa).

The 'HIGH' region signature appears at 12–22; the sequence is PSPTGDPHVGT. Positions 253-257 match the 'KMSKS' region motif; sequence KLSKR. Lys256 is a binding site for ATP.

It belongs to the class-I aminoacyl-tRNA synthetase family. Glutamate--tRNA ligase type 1 subfamily. In terms of assembly, monomer.

The protein resides in the cytoplasm. The enzyme catalyses tRNA(Glu) + L-glutamate + ATP = L-glutamyl-tRNA(Glu) + AMP + diphosphate. In terms of biological role, catalyzes the attachment of glutamate to tRNA(Glu) in a two-step reaction: glutamate is first activated by ATP to form Glu-AMP and then transferred to the acceptor end of tRNA(Glu). This is Glutamate--tRNA ligase from Chlamydia abortus (strain DSM 27085 / S26/3) (Chlamydophila abortus).